The primary structure comprises 301 residues: Transcription elongation factor A protein 1 (301 aa).

Residue Met1 is modified to N-acetylmethionine. The TFIIS N-terminal domain occupies 3 to 80; that stretch reads DEVVRIAKKM…KSWKKLLDGP (78 aa). Residue Lys55 forms a Glycyl lysine isopeptide (Lys-Gly) (interchain with G-Cter in ubiquitin) linkage. Phosphoserine is present on residues Ser57, Ser81, Ser97, and Ser100. The span at 76–93 shows a compositional bias: basic and acidic residues; sequence LLDGPSTDKDPEEKKKEP. The interval 76–139 is disordered; the sequence is LLDGPSTDKD…FPRAPSTSDS (64 aa). In terms of domain architecture, TFIIS central spans 140–256; that stretch reads VRLKCREMLA…EHQMAKTGGT (117 aa). The segment at 259-299 adopts a TFIIS-type zinc-finger fold; it reads DLFTCGKCKKKNCTYTQVQTRSADEPMTTFVVCNECGNRWK. Positions 263, 266, 291, and 294 each coordinate Zn(2+).

This sequence belongs to the TFS-II family. In terms of assembly, interacts with EAF2. Associates with UBR5 and forms a transcription regulatory complex made of CDK9, Pol II, UBR5 and TCEA1/TFIIS. Part of TBP-based Pol II pre-initiation complex (PIC), in which Pol II core assembles with general transcription factors and other specific initiation factors including GTF2E1, GTF2E2, GTF2F1, GTF2F2, TCEA1, ERCC2, ERCC3, GTF2H2, GTF2H3, GTF2H4, GTF2H5, GTF2A1, GTF2A2, GTF2B and TBP; this large multi-subunit PIC complex mediates DNA unwinding and targets Pol II core to the transcription start site where the first phosphodiester bond forms.

The protein resides in the nucleus. In terms of biological role, necessary for efficient RNA polymerase II transcription elongation past template-encoded arresting sites. The arresting sites in DNA have the property of trapping a certain fraction of elongating RNA polymerases that pass through, resulting in locked ternary complexes. Cleavage of the nascent transcript by S-II allows the resumption of elongation from the new 3'-terminus. The polypeptide is Transcription elongation factor A protein 1 (Tcea1) (Mus musculus (Mouse)).